The primary structure comprises 198 residues: 3-isopropylmalate dehydratase small subunit (198 aa).

The protein belongs to the LeuD family. LeuD type 1 subfamily. Heterodimer of LeuC and LeuD.

It catalyses the reaction (2R,3S)-3-isopropylmalate = (2S)-2-isopropylmalate. Its pathway is amino-acid biosynthesis; L-leucine biosynthesis; L-leucine from 3-methyl-2-oxobutanoate: step 2/4. Functionally, catalyzes the isomerization between 2-isopropylmalate and 3-isopropylmalate, via the formation of 2-isopropylmaleate. The polypeptide is 3-isopropylmalate dehydratase small subunit (Mycolicibacterium paratuberculosis (strain ATCC BAA-968 / K-10) (Mycobacterium paratuberculosis)).